Here is a 211-residue protein sequence, read N- to C-terminus: MSKGILGKKLGMTGLFSSDGRHIPVTVIEAGPCVVTQIKTKDKDGYNALQLGFGPKKERHTNKPETGHFEKSGGAAYVMVKEFAVDNPEEFELGQSLSTELFAVGEKIDVAGVSKGRGFAGVMKRHGFGGGRMTHGGRCKRRPGSIGCSAWPSKVIKGKKLPGHYGVERKTVRNLEIVDIRADQNLILLKGAVPGAKSGMLELKKLKFGGK.

It belongs to the universal ribosomal protein uL3 family. Part of the 50S ribosomal subunit. Forms a cluster with proteins L14 and L19.

One of the primary rRNA binding proteins, it binds directly near the 3'-end of the 23S rRNA, where it nucleates assembly of the 50S subunit. The protein is Large ribosomal subunit protein uL3 of Desulfatibacillum aliphaticivorans.